Reading from the N-terminus, the 216-residue chain is Transmembrane emp24 domain-containing protein eca (216 aa).

A signal peptide spans 1–20 (MRDQILSLALLLCVLHSACG). Over 21–182 (LYFHISETER…FRHTSESTNS (162 aa)) the chain is Lumenal. The GOLD domain maps to 30–126 (RKCFIEEVPD…QLRVHLDIQV (97 aa)). Residues 134–164 (ANVAQKEKLTELQLRIRQLLDQVEQITKEQN) adopt a coiled-coil conformation. A helical membrane pass occupies residues 183-203 (RVLWWSLAQTVVLVCMGFWQM). Residues 204-216 (RHLKSFFEAKKLV) are Cytoplasmic-facing. The Prevents secretion from ER motif lies at 213–216 (KKLV).

It belongs to the EMP24/GP25L family.

It localises to the endoplasmic reticulum membrane. Its function is as follows. Eca and bai are essential, though not redundant, for dorsoventral patterning of the embryo. Specifically required during early embryogenesis for the activity of maternal tkv, while the zygotic tkv is not affected. Involved in Golgi organization. The protein is Transmembrane emp24 domain-containing protein eca of Drosophila ananassae (Fruit fly).